The primary structure comprises 195 residues: Antigenic thaumatin-like protein ARB_01183 (195 aa).

Residues 1–22 form the signal peptide; that stretch reads MHSNTAVIALSALAALVPAALA. 2 cysteine pairs are disulfide-bonded: Cys125/Cys153 and Cys130/Cys137. The disordered stretch occupies residues 171–195; sequence GPKKMFKPVQEKAANRPRHPHARPE. Residues 185–195 are compositionally biased toward basic residues; the sequence is NRPRHPHARPE.

It belongs to the thaumatin family.

It is found in the secreted. Functionally, might be involved in the inhibition of growth of fungal competitors and pathogenicity. This Arthroderma benhamiae (strain ATCC MYA-4681 / CBS 112371) (Trichophyton mentagrophytes) protein is Antigenic thaumatin-like protein ARB_01183.